The following is a 106-amino-acid chain: uncharacterized protein (106 aa).

Its subcellular location is the mitochondrion. This is an uncharacterized protein from Arabidopsis thaliana (Mouse-ear cress).